Here is a 249-residue protein sequence, read N- to C-terminus: 5'-nucleotidase SurE (249 aa).

A divalent metal cation is bound by residues D9, D10, S40, and N92.

This sequence belongs to the SurE nucleotidase family. It depends on a divalent metal cation as a cofactor.

It is found in the cytoplasm. It catalyses the reaction a ribonucleoside 5'-phosphate + H2O = a ribonucleoside + phosphate. Functionally, nucleotidase that shows phosphatase activity on nucleoside 5'-monophosphates. The sequence is that of 5'-nucleotidase SurE from Shewanella frigidimarina (strain NCIMB 400).